Here is a 555-residue protein sequence, read N- to C-terminus: Polypyrimidine tract-binding protein 1 (555 aa).

N-acetylmethionine is present on Met-1. The residue at position 16 (Ser-16) is a Phosphoserine. 3 RRM domains span residues 58 to 142 (RVIH…SSPN), 183 to 259 (LRII…FSKL), and 361 to 412 (SVLL…SQAQ). Lys-64 is covalently cross-linked (Glycyl lysine isopeptide (Lys-Gly) (interchain with G-Cter in SUMO2)). Tyr-126 is modified (phosphotyrosine). Thr-137 bears the Phosphothreonine mark. Residue Ser-140 is modified to Phosphoserine. Residue Lys-217 forms a Glycyl lysine isopeptide (Lys-Gly) (interchain with G-Cter in SUMO2) linkage. The tract at residues 435-457 (HQSVQLPREGQEDQGLTKDYGSS) is disordered. A Phosphoserine modification is found at Ser-457. The RRM 4 domain maps to 478–553 (ATLHLSNIPP…HHLRVSFSKS (76 aa)).

As to quaternary structure, monomer. Part of a ternary complex containing KHSRP, PTBP1, PTBP2 and HNRPH1. Interacts with SFPQ. Interacts with RAVER1. Interacts with IVNS1ABP (via BACK domain); the interaction is direct. In terms of tissue distribution, expressed in myoblast; expression gradually decreases during muscle cell differentiation (at protein level).

It is found in the nucleus. In terms of biological role, plays a role in pre-mRNA splicing and in the regulation of alternative splicing events. Activates exon skipping of its own pre-mRNA during muscle cell differentiation. Binds to the polypyrimidine tract of introns. May promote RNA looping when bound to two separate polypyrimidine tracts in the same pre-mRNA. May promote the binding of U2 snRNP to pre-mRNA. Cooperates with RAVER1 to modulate switching between mutually exclusive exons during maturation of the TPM1 pre-mRNA. Represses the splicing of MAPT/Tau exon 10. Binds to polypyrimidine-rich controlling element (PCE) of CFTR and promotes exon skipping of CFTR exon 9, thereby antagonizing TIA1 and its role in exon inclusion of CFTR exon 9. Plays a role in the splicing of pyruvate kinase PKM by binding repressively to a polypyrimidine tract flanking PKM exon 9, inhibiting exon 9 inclusion and resulting in exon 10 inclusion and production of the PKM M2 isoform. The protein is Polypyrimidine tract-binding protein 1 (Ptbp1) of Mus musculus (Mouse).